Reading from the N-terminus, the 379-residue chain is Transcription factor TIP2 (379 aa).

The tract at residues 144–184 is disordered; it reads MVGPFESSPTPRSGGGRKRSRATAGFHGGGPANGVEKKEKQ. Residues 173-186 form a basic motif; degenerate region; sequence GPANGVEKKEKQRR. Residues 173–222 enclose the bHLH domain; it reads GPANGVEKKEKQRRLRLTEKYNALMLLIPNRTKEDRATVISDAIEYIQEL. Residues 187–222 are helix-loop-helix motif; sequence LRLTEKYNALMLLIPNRTKEDRATVISDAIEYIQEL.

This sequence belongs to the bHLH protein family. As to quaternary structure, homodimer. Interacts with TDR, but not with EAT1. As to expression, highly expressed in anthers; strong expression in the middle layer and tapetum, and weak expression in the endothecium.

It localises to the nucleus. Transcription factor that binds to the E-box-containing promoter regions of the transcription factors TDR and EAT1, activating their expression. May have a role in specifying the cell pattern of the inner anther walls and functioning in meiosis progression. Required for male reproduction. Acts downstream of UDT1 and GAMYB, but upstream of TDR1 and EAT1 in pollen development. This is Transcription factor TIP2 (TIP2) from Oryza sativa subsp. japonica (Rice).